A 305-amino-acid polypeptide reads, in one-letter code: Mitochondrial uncoupling protein 2 (305 aa).

Solcar repeat units lie at residues I10–L104, I114–T205, and D214–V297. 6 helical membrane passes run F16–A36, I73–L93, I120–V140, T179–Y199, L220–V240, and Y270–T290.

It belongs to the mitochondrial carrier (TC 2.A.29) family.

The protein localises to the mitochondrion inner membrane. In terms of biological role, PUMPS are mitochondrial transporter proteins that create proton leaks across the inner mitochondrial membrane, thus uncoupling oxidative phosphorylation. This leads to a decrease in the efficiency of oxidative phosphorylation and an increase in heat production. May be involved in protecting plant cells against oxidative stress damage. In Arabidopsis thaliana (Mouse-ear cress), this protein is Mitochondrial uncoupling protein 2 (PUMP2).